We begin with the raw amino-acid sequence, 805 residues long: Putative cation-transporting ATPase MJ1226 (805 aa).

4 helical membrane-spanning segments follow: residues 53–73 (SYFW…SAII), 75–95 (HWVD…VGFW), 226–246 (IGDY…AVEL), and 258–278 (FALV…LSIT). Catalysis depends on Asp-311, which acts as the 4-aspartylphosphate intermediate. 6 helical membrane passes run 615 to 637 (YVIY…ILIL), 641 to 663 (PITA…AIAY), 680 to 700 (ILML…LIFY), 712 to 734 (ELQS…VTRI), 747 to 769 (LLFW…GIFM), and 773 to 790 (GWDL…WMLI).

It belongs to the cation transport ATPase (P-type) (TC 3.A.3) family. Type IIIA subfamily.

The protein localises to the cell membrane. The catalysed reaction is ATP + H2O = ADP + phosphate + H(+). The chain is Putative cation-transporting ATPase MJ1226 from Methanocaldococcus jannaschii (strain ATCC 43067 / DSM 2661 / JAL-1 / JCM 10045 / NBRC 100440) (Methanococcus jannaschii).